Reading from the N-terminus, the 484-residue chain is Zinc metalloproteinase/disintegrin PMMP-2 (484 aa).

The first 20 residues, 1–20, serve as a signal peptide directing secretion; the sequence is MIQVLLVTICLAVFPYQGSS. Residues 21 to 190 constitute a propeptide that is removed on maturation; that stretch reads IILESGNVDD…KASQLNLTPL (170 aa). In terms of domain architecture, Peptidase M12B spans 197–395; it reads RYVKLAIVVD…YNPQCILNAP (199 aa). The N-linked (GlcNAc...) asparagine glycan is linked to asparagine 239. Cystine bridges form between cysteine 308-cysteine 390, cysteine 352-cysteine 374, and cysteine 354-cysteine 357. Residue histidine 333 participates in Zn(2+) binding. Residue glutamate 334 is part of the active site. 2 residues coordinate Zn(2+): histidine 337 and histidine 343. The propeptide occupies 396-413; it reads LRTDTVSTPVSGNEFLEA. The Disintegrin domain maps to 403–484; sequence TPVSGNEFLE…ADCPRNGLYG (82 aa). 6 disulfides stabilise this stretch: cysteine 417-cysteine 432, cysteine 419-cysteine 427, cysteine 426-cysteine 449, cysteine 440-cysteine 446, cysteine 445-cysteine 470, and cysteine 458-cysteine 477. The short motif at 462–464 is the Cell attachment site element; that stretch reads RGD.

Belongs to the venom metalloproteinase (M12B) family. P-II subfamily. P-IIa sub-subfamily. Monomer. The cofactor is Zn(2+). As to expression, expressed by the venom gland.

It localises to the secreted. Its function is as follows. Impairs hemostasis in the envenomed animal. Functionally, inhibits platelet aggregation induced by ADP, thrombin, platelet-activating factor and collagen. Acts by inhibiting fibrinogen interaction with platelet receptors GPIIb/GPIIIa (ITGA2B/ITGB3). The chain is Zinc metalloproteinase/disintegrin PMMP-2 from Protobothrops mucrosquamatus (Taiwan habu).